Here is a 528-residue protein sequence, read N- to C-terminus: Keratin, type II cytoskeletal 78 (528 aa).

Residues M1 to Q104 form a head region. Residues V23–S45 are disordered. A compositionally biased stretch (low complexity) spans G24–G39. The interval E105–L140 is coil 1A. In terms of domain architecture, IF rod spans E105–M418. The segment at Q141–Y159 is linker 1. The tract at residues L160–Q252 is coil 1B. The linker 12 stretch occupies residues T253–L275. The tract at residues I276–E415 is coil 2. Residues C416–Y528 are tail.

The protein belongs to the intermediate filament family. Heterotetramer of two type I and two type II keratins.

The chain is Keratin, type II cytoskeletal 78 (KRT78) from Bos taurus (Bovine).